The sequence spans 314 residues: Vacuolar membrane protein SCY_4732 (314 aa).

The segment at 32–61 (KPTSSVVSETSSKSLPSLTSSAFSTSSGTT) is disordered. A helical transmembrane segment spans residues 93–113 (VYIAVGAVIGAIFISILIWWL). Residues Ser-148, Ser-254, and Ser-274 each carry the phosphoserine modification. The tract at residues 240 to 309 (EERKLNLNRP…PSMFLDDVLN (70 aa)) is disordered. Basic and acidic residues predominate over residues 254–269 (SPERKEKKINSMEGYH).

Belongs to the PRM5 family.

Its subcellular location is the vacuole membrane. This chain is Vacuolar membrane protein SCY_4732, found in Saccharomyces cerevisiae (strain YJM789) (Baker's yeast).